Here is a 780-residue protein sequence, read N- to C-terminus: Subtilisin-like protease SBT1.3 (780 aa).

The first 25 residues, 1 to 25 (MANKNPLQKPFLFIILSINLIFLQA), serve as a signal peptide directing secretion. The propeptide at 26 to 120 (ETTTQISTKK…VIPETRYELH (95 aa)) is activation peptide. Residues 36–120 (TYVIHMDKSA…VIPETRYELH (85 aa)) form the Inhibitor I9 domain. Positions 116–628 (RYELHTTRSP…AGHIDPLRAT (513 aa)) constitute a Peptidase S8 domain. The active-site Charge relay system is the aspartate 154. Asparagine 165 carries an N-linked (GlcNAc...) asparagine glycan. Catalysis depends on histidine 227, which acts as the Charge relay system. One can recognise a PA domain in the interval 384–477 (KQYPLVYLGR…GEKEGKLIKQ (94 aa)). An N-linked (GlcNAc...) asparagine glycan is attached at asparagine 394. The active-site Charge relay system is the serine 560. Asparagine 663 and asparagine 731 each carry an N-linked (GlcNAc...) asparagine glycan.

Belongs to the peptidase S8 family.

Its subcellular location is the secreted. The sequence is that of Subtilisin-like protease SBT1.3 from Arabidopsis thaliana (Mouse-ear cress).